The sequence spans 128 residues: uncharacterized protein (128 aa).

The segment covering 1-28 (MDADDFGKKDLENGNESPKKPIFMKDWK) has biased composition (basic and acidic residues). The interval 1–30 (MDADDFGKKDLENGNESPKKPIFMKDWKNS) is disordered.

Its subcellular location is the cytoplasm. The protein resides in the nucleus. This is an uncharacterized protein from Schizosaccharomyces pombe (strain 972 / ATCC 24843) (Fission yeast).